We begin with the raw amino-acid sequence, 895 residues long: uncharacterized protein (895 aa).

NAD(+) is bound at residue 2 to 19 (NISVIGTGYVGLIQAVGL). Residue C261 is part of the active site. Positions 468 to 614 (LIGYYLSEGW…LLILLQLLGI (147 aa)) constitute a DOD-type homing endonuclease domain.

This sequence belongs to the UDP-glucose/GDP-mannose dehydrogenase family. This protein undergoes a protein self splicing that involves a post-translational excision of the intervening region (intein) followed by peptide ligation.

This is an uncharacterized protein from Methanocaldococcus jannaschii (strain ATCC 43067 / DSM 2661 / JAL-1 / JCM 10045 / NBRC 100440) (Methanococcus jannaschii).